We begin with the raw amino-acid sequence, 426 residues long: Dihydropyrimidine dehydrogenase (NADP(+)), chloroplastic (426 aa).

A chloroplast-targeting transit peptide spans 1–44 (MASMSFALNRFSGLSSKTTLSADFDPSSRRSFLPPTRVGLKISS). Position 45 is an N-acetylalanine (Ala-45). Substrate contacts are provided by residues Asn-129 and 188 to 190 (NFS). Cys-191 serves as the catalytic Nucleophile. 256–257 (NT) is a substrate binding site. Positions 395 to 414 (VEQRKAEKRGLKSDKDWTGD) are disordered.

The protein belongs to the dihydropyrimidine dehydrogenase family. In terms of tissue distribution, expressed in roots, leaves, stems, siliques and flowers. Highly expressed ion dry seeds.

The protein resides in the plastid. It localises to the chloroplast. The enzyme catalyses 5,6-dihydrouracil + NADP(+) = uracil + NADPH + H(+). It functions in the pathway amino-acid biosynthesis; beta-alanine biosynthesis. Involved in pyrimidine base degradation. Catalyzes the reduction of uracil to 5,6-dihydrouracil (DHU) by using NADH as a specific cosubstrate and the reduction of thymine to 5,6-dihydrothymine (DHT). Involved in the recycling of nitrogen from nucleobases to general nitrogen metabolism. This chain is Dihydropyrimidine dehydrogenase (NADP(+)), chloroplastic, found in Arabidopsis thaliana (Mouse-ear cress).